A 441-amino-acid chain; its full sequence is ATP-dependent protease ATPase subunit HslU (441 aa).

ATP-binding positions include Val-18, 60–65, Asp-254, Glu-319, and Arg-391; that span reads GVGKTE.

It belongs to the ClpX chaperone family. HslU subfamily. As to quaternary structure, a double ring-shaped homohexamer of HslV is capped on each side by a ring-shaped HslU homohexamer. The assembly of the HslU/HslV complex is dependent on binding of ATP.

Its subcellular location is the cytoplasm. Its function is as follows. ATPase subunit of a proteasome-like degradation complex; this subunit has chaperone activity. The binding of ATP and its subsequent hydrolysis by HslU are essential for unfolding of protein substrates subsequently hydrolyzed by HslV. HslU recognizes the N-terminal part of its protein substrates and unfolds these before they are guided to HslV for hydrolysis. The polypeptide is ATP-dependent protease ATPase subunit HslU (Verminephrobacter eiseniae (strain EF01-2)).